The primary structure comprises 451 residues: D-aminoacyl-tRNA deacylase (451 aa).

The disordered stretch occupies residues 410 to 437; that stretch reads RTADIPEGPKFGKLASGESVEIDGEEID.

Belongs to the DtdA deacylase family. Monomer. It depends on Zn(2+) as a cofactor.

It carries out the reaction a D-aminoacyl-tRNA + H2O = a tRNA + a D-alpha-amino acid + H(+). It catalyses the reaction glycyl-tRNA(Ala) + H2O = tRNA(Ala) + glycine + H(+). Its function is as follows. D-aminoacyl-tRNA deacylase with broad substrate specificity. By recycling D-aminoacyl-tRNA to D-amino acids and free tRNA molecules, this enzyme counteracts the toxicity associated with the formation of D-aminoacyl-tRNA entities in vivo. The protein is D-aminoacyl-tRNA deacylase of Haloarcula marismortui (strain ATCC 43049 / DSM 3752 / JCM 8966 / VKM B-1809) (Halobacterium marismortui).